The sequence spans 242 residues: Venom redulysin 2 (242 aa).

The signal sequence occupies residues 1–19; that stretch reads MSKIWILLLLVGAVQFARG. The propeptide occupies 20 to 46; it reads FPALEEEQEDDVIDWPSFEYDLSDEER.

Belongs to the redulysin-like family. Post-translationally, contains 5 disulfide bonds. As to expression, expressed by the venom gland (posterior main gland) (at protein level).

It is found in the secreted. Its function is as follows. Highly abundant protein that may be responsible for the observed disruption of sensory neuron membranes, since it is homologous to proteins such as trialysin, which forms pores in lipid bilayers. Probable insecticidal toxin. This chain is Venom redulysin 2, found in Platymeris rhadamanthus (Red spot assassin bug).